A 103-amino-acid polypeptide reads, in one-letter code: UPF0145 protein CYA_2258 (103 aa).

The protein belongs to the UPF0145 family.

This Synechococcus sp. (strain JA-3-3Ab) (Cyanobacteria bacterium Yellowstone A-Prime) protein is UPF0145 protein CYA_2258.